We begin with the raw amino-acid sequence, 147 residues long: uncharacterized protein (147 aa).

The N-acetyltransferase domain maps to 7–147 (LEINYKTDEL…GHDVLVWAPK (141 aa)).

This is an uncharacterized protein from Staphylococcus haemolyticus (strain JCSC1435).